The primary structure comprises 427 residues: Carboxyl-terminal-processing protease (427 aa).

Positions 1–31 (MGKRTRRFWALAFSLLMGALIYLGNTPSALA) are cleaved as a signal peptide. In terms of domain architecture, PDZ spans 104–186 (NLQVTTTGEL…TKVSLEILSA (83 aa)). Catalysis depends on charge relay system residues Ser-313, Asp-324, and Lys-338.

Belongs to the peptidase S41A family.

Its subcellular location is the cellular thylakoid lumen. The catalysed reaction is The enzyme shows specific recognition of a C-terminal tripeptide, Xaa-Yaa-Zaa, in which Xaa is preferably Ala or Leu, Yaa is preferably Ala or Tyr, and Zaa is preferably Ala, but then cleaves at a variable distance from the C-terminus. A typical cleavage is -Ala-Ala-|-Arg-Ala-Ala-Lys-Glu-Asn-Tyr-Ala-Leu-Ala-Ala.. In terms of biological role, cleavage of the 16 C-terminal residues from the D1 precursor of photosystem II (PSII). This proteolytic processing is necessary to allow the light-driven assembly of the oxygen-evolving cluster (a tetranuclear manganese), which is responsible for photosynthetic water oxidation. The polypeptide is Carboxyl-terminal-processing protease (ctpA) (Synechocystis sp. (strain ATCC 27184 / PCC 6803 / Kazusa)).